The sequence spans 282 residues: Pantothenate synthetase (282 aa).

Residue 30 to 37 (MGALHQGH) coordinates ATP. Residue H37 is the Proton donor of the active site. Q61 contacts (R)-pantoate. A beta-alanine-binding site is contributed by Q61. 149 to 152 (GEKD) serves as a coordination point for ATP. Position 155 (Q155) interacts with (R)-pantoate. ATP contacts are provided by residues L178 and 186–189 (MSSR).

It belongs to the pantothenate synthetase family. Homodimer.

It is found in the cytoplasm. The enzyme catalyses (R)-pantoate + beta-alanine + ATP = (R)-pantothenate + AMP + diphosphate + H(+). It functions in the pathway cofactor biosynthesis; (R)-pantothenate biosynthesis; (R)-pantothenate from (R)-pantoate and beta-alanine: step 1/1. Its function is as follows. Catalyzes the condensation of pantoate with beta-alanine in an ATP-dependent reaction via a pantoyl-adenylate intermediate. The protein is Pantothenate synthetase of Flavobacterium psychrophilum (strain ATCC 49511 / DSM 21280 / CIP 103535 / JIP02/86).